The primary structure comprises 169 residues: Small ribosomal subunit protein uS5 (169 aa).

Residues 14–77 (LQEKLVAVRR…EQARKNMRKV (64 aa)) form the S5 DRBM domain.

Belongs to the universal ribosomal protein uS5 family. Part of the 30S ribosomal subunit. Contacts proteins S4 and S8.

Functionally, with S4 and S12 plays an important role in translational accuracy. Its function is as follows. Located at the back of the 30S subunit body where it stabilizes the conformation of the head with respect to the body. This Methylococcus capsulatus (strain ATCC 33009 / NCIMB 11132 / Bath) protein is Small ribosomal subunit protein uS5.